The following is a 237-amino-acid chain: BTB/POZ domain-containing protein KCTD6 (237 aa).

An interaction with ANK1 isoform Mu7 region spans residues 1–104 (MDNGDWGYMM…FYQIEPLIQC (104 aa)). The interval 10-110 (MSDPVTLNVG…LIQCLNDPRP (101 aa)) is interaction with CUL3. The BTB domain maps to 12 to 81 (DPVTLNVGGH…LRTSELTLPL (70 aa)). The tract at residues 113-187 (PMDTFEEVVE…TFGPCDYHQE (75 aa)) is interaction with USP21.

In terms of assembly, homopentamer. Interacts with KCTD11; KCTD6 and KCTD11 may associate in heteropentameric assemblies. Interacts (via BTB domain) with CUL3; initially a 4:4 stoichiometry has been reported, however, electron microscopy revealed pentameric states with a five-pointed pinwheel shape. The interaction with CUL3 is indicative for a participation in a BCR (BTB-CUL3-RBX1) E3 ubiquitin-protein ligase complex. Interacts with HDAC1; probably indirect as the interaction requires the presence of KCTD11. Interacts with USP21 (preferentially catalytic inactive form). Interacts with ANK1 isoform Mu7; detected in striated muscle. Interacts with USP11. Highly expressed in cerebellum and brain.

The protein localises to the cytoplasm. It localises to the myofibril. The protein resides in the sarcomere. It is found in the m line. It participates in protein modification; protein ubiquitination. Its function is as follows. Probable substrate-specific adapter of a BCR (BTB-CUL3-RBX1) E3 ubiquitin-protein ligase complex mediating the ubiquitination and subsequent proteasomal degradation of target proteins. Promotes the ubiquitination of HDAC1; the function seems to depend on KCTD11:KCTD6 oligomerization. Can function as antagonist of the Hedgehog pathway by affecting the nuclear transfer of transcription factor GLI1; the function probably occurs via HDAC1 down-regulation, keeping GLI1 acetylated and inactive. Inhibits cell growth and tumorigenicity of medulloblastoma (MDB). Involved in regulating protein levels of ANK1 isoform Mu7 probably implicating CUL3-dependent proteasomal degradation. The protein is BTB/POZ domain-containing protein KCTD6 (Kctd6) of Mus musculus (Mouse).